A 229-amino-acid polypeptide reads, in one-letter code: Orotidine 5'-phosphate decarboxylase (229 aa).

Substrate is bound by residues aspartate 11, lysine 33, 60 to 69, threonine 119, arginine 180, glutamine 189, glycine 209, and arginine 210; that span reads DLKFHDIPNT. Lysine 62 serves as the catalytic Proton donor.

The protein belongs to the OMP decarboxylase family. Type 1 subfamily. Homodimer.

It catalyses the reaction orotidine 5'-phosphate + H(+) = UMP + CO2. The protein operates within pyrimidine metabolism; UMP biosynthesis via de novo pathway; UMP from orotate: step 2/2. Functionally, catalyzes the decarboxylation of orotidine 5'-monophosphate (OMP) to uridine 5'-monophosphate (UMP). This Dichelobacter nodosus (strain VCS1703A) protein is Orotidine 5'-phosphate decarboxylase.